A 94-amino-acid chain; its full sequence is Translation initiation factor 1A 2 (94 aa).

One can recognise an S1-like domain in the interval 6 to 80 (GRRNLRMPSD…EKANIEWRYS (75 aa)).

The protein belongs to the eIF-1A family.

Its function is as follows. Seems to be required for maximal rate of protein biosynthesis. Enhances ribosome dissociation into subunits and stabilizes the binding of the initiator Met-tRNA(I) to 40 S ribosomal subunits. In Haloquadratum walsbyi (strain DSM 16790 / HBSQ001), this protein is Translation initiation factor 1A 2.